A 450-amino-acid polypeptide reads, in one-letter code: MLVTAYLAFVVLLASCLGLELSRCRAKPSGRACSNPSFLRFQLDFYQVYFLALAADWLQAPYLYKLYQHYHFLEAQIAILYVCGLASTVLFGLVASSLVDWLGRKKSCVLFSLTYSLCCLTKLSRDYFVLLVGRALGGLSTALLFSAFEAWYIHEHLERHDFPTEWIPATFARAAFWNHVLAVAAGVAAEAVACWMGLGPVAPFVAAIPLLALAGALALHNWGENYDRQRAFSRTCAGGLRCLLSDRRVLLLGTIQALFESVIFIFVFLWTPVLDPHGAPLGIIFSSFMAASLLGSSLYRIATSKRYHLQPMHLLSLAVLIVVFSLFMLTFSTSPGQESPVESFIAFLLIELACGLYFPSMSFLRRKVIPETEQAGVLNWFRVPLHLLACLGLLVLHDSDRKTGTRNMFSICSAVMVMALLAVVGLFTVVRHDAELRVPSPTGEPYTPEL.

Helical transmembrane passes span 1–21, 43–63, 79–99, 128–148, 176–196, 198–218, 249–269, 278–298, 311–331, 344–364, 376–396, and 409–429; these read MLVT…GLEL, LDFY…APYL, ILYV…SSLV, FVLL…FSAF, FWNH…ACWM, LGPV…GALA, VLLL…FVFL, GAPL…GSSL, PMHL…MLTF, FIAF…MSFL, GVLN…LLVL, and FSIC…LFTV.

Belongs to the major facilitator superfamily.

Its subcellular location is the cell membrane. In terms of biological role, mediates high-affinity intracellular uptake of the rare oligo-element molybdenum. The sequence is that of Molybdate-anion transporter (MFSD5) from Bos taurus (Bovine).